Consider the following 261-residue polypeptide: MTHQTHAYHMVNPSPWPLTGALSALLLTSGLMMWFHFNNPTLLVLGLLTNLISSYQWWRDIVREGTYQGHHTKVVQKGLRYGMVLFIISEVFFFLGFFWAFYHSSLAPTPELGGCWPPTGISPLNPLEVPLLNTSILLASGVSITWSHHSLMEGNRKQMIQALMITIALGLYFTALQAMEYYESSFTISDGVYGSTFFVATGFHGLHVIIGTTFLITCLLRQLLYHFTSNHHFGFEAAAWYWHFVDVVWLFLYVSIYWWGS.

Over 1–15 (MTHQTHAYHMVNPSP) the chain is Mitochondrial matrix. The chain crosses the membrane as a helical span at residues 16–34 (WPLTGALSALLLTSGLMMW). The Mitochondrial intermembrane segment spans residues 35–40 (FHFNNP). A helical transmembrane segment spans residues 41 to 66 (TLLVLGLLTNLISSYQWWRDIVREGT). At 67-72 (YQGHHT) the chain is on the mitochondrial matrix side. A helical membrane pass occupies residues 73–105 (KVVQKGLRYGMVLFIISEVFFFLGFFWAFYHSS). The Mitochondrial intermembrane portion of the chain corresponds to 106-128 (LAPTPELGGCWPPTGISPLNPLE). Residues 129-152 (VPLLNTSILLASGVSITWSHHSLM) traverse the membrane as a helical segment. Residues 153-155 (EGN) lie on the Mitochondrial matrix side of the membrane. Residues 156-183 (RKQMIQALMITIALGLYFTALQAMEYYE) traverse the membrane as a helical segment. The Mitochondrial intermembrane portion of the chain corresponds to 184-190 (SSFTISD). The chain crosses the membrane as a helical span at residues 191-223 (GVYGSTFFVATGFHGLHVIIGTTFLITCLLRQL). The Mitochondrial matrix segment spans residues 224 to 232 (LYHFTSNHH). The chain crosses the membrane as a helical span at residues 233–256 (FGFEAAAWYWHFVDVVWLFLYVSI). The Mitochondrial intermembrane segment spans residues 257 to 261 (YWWGS).

The protein belongs to the cytochrome c oxidase subunit 3 family. As to quaternary structure, component of the cytochrome c oxidase (complex IV, CIV), a multisubunit enzyme composed of 14 subunits. The complex is composed of a catalytic core of 3 subunits MT-CO1, MT-CO2 and MT-CO3, encoded in the mitochondrial DNA, and 11 supernumerary subunits COX4I, COX5A, COX5B, COX6A, COX6B, COX6C, COX7A, COX7B, COX7C, COX8 and NDUFA4, which are encoded in the nuclear genome. The complex exists as a monomer or a dimer and forms supercomplexes (SCs) in the inner mitochondrial membrane with NADH-ubiquinone oxidoreductase (complex I, CI) and ubiquinol-cytochrome c oxidoreductase (cytochrome b-c1 complex, complex III, CIII), resulting in different assemblies (supercomplex SCI(1)III(2)IV(1) and megacomplex MCI(2)III(2)IV(2)).

It localises to the mitochondrion inner membrane. The enzyme catalyses 4 Fe(II)-[cytochrome c] + O2 + 8 H(+)(in) = 4 Fe(III)-[cytochrome c] + 2 H2O + 4 H(+)(out). Component of the cytochrome c oxidase, the last enzyme in the mitochondrial electron transport chain which drives oxidative phosphorylation. The respiratory chain contains 3 multisubunit complexes succinate dehydrogenase (complex II, CII), ubiquinol-cytochrome c oxidoreductase (cytochrome b-c1 complex, complex III, CIII) and cytochrome c oxidase (complex IV, CIV), that cooperate to transfer electrons derived from NADH and succinate to molecular oxygen, creating an electrochemical gradient over the inner membrane that drives transmembrane transport and the ATP synthase. Cytochrome c oxidase is the component of the respiratory chain that catalyzes the reduction of oxygen to water. Electrons originating from reduced cytochrome c in the intermembrane space (IMS) are transferred via the dinuclear copper A center (CU(A)) of subunit 2 and heme A of subunit 1 to the active site in subunit 1, a binuclear center (BNC) formed by heme A3 and copper B (CU(B)). The BNC reduces molecular oxygen to 2 water molecules using 4 electrons from cytochrome c in the IMS and 4 protons from the mitochondrial matrix. In Tachyglossus aculeatus aculeatus (Southeast Australian short-beaked echidna), this protein is Cytochrome c oxidase subunit 3 (MT-CO3).